Reading from the N-terminus, the 319-residue chain is Ribonuclease Z (319 aa).

7 residues coordinate Zn(2+): His62, His64, Asp66, His67, His145, Asp216, and His274. Catalysis depends on Asp66, which acts as the Proton acceptor.

Belongs to the RNase Z family. As to quaternary structure, homodimer. The cofactor is Zn(2+).

It catalyses the reaction Endonucleolytic cleavage of RNA, removing extra 3' nucleotides from tRNA precursor, generating 3' termini of tRNAs. A 3'-hydroxy group is left at the tRNA terminus and a 5'-phosphoryl group is left at the trailer molecule.. Functionally, zinc phosphodiesterase, which displays some tRNA 3'-processing endonuclease activity. Probably involved in tRNA maturation, by removing a 3'-trailer from precursor tRNA. In Synechococcus sp. (strain CC9605), this protein is Ribonuclease Z.